We begin with the raw amino-acid sequence, 1038 residues long: Protein argonaute 1D (1038 aa).

Disordered stretches follow at residues Met1 to Pro58 and Ala110 to Leu134. Gly residues-rich tracts occupy residues Arg18 to Arg29 and Gly43 to Tyr52. A compositionally biased stretch (low complexity) spans Pro115–Leu134. Residues Pro380–Glu493 enclose the PAZ domain. The Piwi domain maps to Leu669 to Glu990. Positions Asp992–Val1021 are disordered.

This sequence belongs to the argonaute family. Ago subfamily.

Functionally, probably involved in the RNA silencing pathway. May bind to short RNAs such as microRNAs (miRNAs) or short interfering RNAs (siRNAs), and represses the translation of mRNAs which are complementary to them. This chain is Protein argonaute 1D (AGO1D), found in Oryza sativa subsp. japonica (Rice).